Reading from the N-terminus, the 344-residue chain is 2-aminoethylphosphonate--pyruvate transaminase (344 aa).

The residue at position 194 (Lys-194) is an N6-(pyridoxal phosphate)lysine.

It belongs to the class-V pyridoxal-phosphate-dependent aminotransferase family. PhnW subfamily. As to quaternary structure, homodimer. It depends on pyridoxal 5'-phosphate as a cofactor.

The enzyme catalyses (2-aminoethyl)phosphonate + pyruvate = phosphonoacetaldehyde + L-alanine. Functionally, involved in phosphonate degradation. In Bacillus cereus, this protein is 2-aminoethylphosphonate--pyruvate transaminase.